The primary structure comprises 96 residues: ESAT-6-like protein SAG0230 (96 aa).

It belongs to the WXG100 family. sagEsxA-like subfamily. Homodimer.

The polypeptide is ESAT-6-like protein SAG0230 (Streptococcus agalactiae serotype V (strain ATCC BAA-611 / 2603 V/R)).